The following is a 138-amino-acid chain: ATP synthase epsilon chain (138 aa).

The protein belongs to the ATPase epsilon chain family. In terms of assembly, F-type ATPases have 2 components, CF(1) - the catalytic core - and CF(0) - the membrane proton channel. CF(1) has five subunits: alpha(3), beta(3), gamma(1), delta(1), epsilon(1). CF(0) has three main subunits: a, b and c.

It localises to the cell inner membrane. In terms of biological role, produces ATP from ADP in the presence of a proton gradient across the membrane. This chain is ATP synthase epsilon chain, found in Cupriavidus metallidurans (strain ATCC 43123 / DSM 2839 / NBRC 102507 / CH34) (Ralstonia metallidurans).